The chain runs to 669 residues: RNA-binding protein 14 (669 aa).

2 RRM domains span residues 1–73 (MKIF…MSRP) and 79–149 (WKIF…LSTK). Glycyl lysine isopeptide (Lys-Gly) (interchain with G-Cter in SUMO2) cross-links involve residues lysine 126, lysine 135, lysine 138, lysine 149, and lysine 153. Disordered regions lie at residues 147-175 (STKG…DTAF) and 193-232 (NSTG…PLTA). Serine 161 carries the phosphoserine modification. At lysine 164 the chain carries N6-acetyllysine; alternate. Residue lysine 164 forms a Glycyl lysine isopeptide (Lys-Gly) (interchain with G-Cter in SUMO2); alternate linkage. The residue at position 206 (threonine 206) is a Phosphothreonine. 6 positions are modified to phosphoserine: serine 220, serine 242, serine 244, serine 256, serine 272, and serine 280. A disordered region spans residues 284–303 (PYRGQLASPSSQSAAASSLG). The segment covering 287 to 303 (GQLASPSSQSAAASSLG) has biased composition (low complexity). Positions 307-354 (GAQPSASALSSYGGQAAAASSLNSYGAQGSSLASYGNQPSSYGAQAAS) are TRBP-interacting domain; interaction with STIL. 4 positions are modified to phosphoserine: serine 520, serine 523, serine 527, and serine 562. The disordered stretch occupies residues 566 to 590 (VANANSTPPPYERTRLSPPRASYDD). Threonine 572 bears the Phosphothreonine mark. The residue at position 582 (serine 582) is a Phosphoserine. Lysine 600 participates in a covalent cross-link: Glycyl lysine isopeptide (Lys-Gly) (interchain with G-Cter in SUMO2). Residues serine 618, serine 620, serine 623, serine 627, serine 643, and serine 649 each carry the phosphoserine modification.

Isoform 1: Interacts with NCOA6, CITED1 and XRCC5/KU86. Isoform 1: Interacts with SS18 isoform 1. Isoform 1: Interacts with SS18 isoform 2. Interacts with STIL and interferes with its interaction with CPAP. Interacts with gamma-tubulin. Part of the HDP-RNP complex composed of at least HEXIM1, PRKDC, XRCC5, XRCC6, paraspeckle proteins (SFPQ, NONO, PSPC1, RBM14, and MATR3) and NEAT1 RNA. Interacts with RBPMS; the interaction allows cooperative assembly of RNA-bound stable cell-specific alternative splicing regulatory complexes. As to expression, expressed in all tissues tested, including brain, heart, skeletal muscle, colon, thymus, spleen, kidney, liver, small intestine, placenta, lung and peripheral blood lymphocytes.

It is found in the nucleus. Its subcellular location is the nucleolus. It localises to the cytoplasm. Its function is as follows. Isoform 1 may function as a nuclear receptor coactivator, enhancing transcription through other coactivators such as NCOA6 and CITED1. Isoform 2, functions as a transcriptional repressor, modulating transcriptional activities of coactivators including isoform 1, NCOA6 and CITED1. Regulates centriole biogenesis by suppressing the formation of aberrant centriolar protein complexes in the cytoplasm and thus preserving mitotic spindle integrity. Prevents the formation of the STIL-CPAP complex (which can induce the formation of aberrant centriolar protein complexes) by interfering with the interaction of STIL with CPAP. Plays a role in the regulation of DNA virus-mediated innate immune response by assembling into the HDP-RNP complex, a complex that serves as a platform for IRF3 phosphorylation and subsequent innate immune response activation through the cGAS-STING pathway. Also involved in the regulation of pre-mRNA alternative splicing. This chain is RNA-binding protein 14 (RBM14), found in Homo sapiens (Human).